A 194-amino-acid chain; its full sequence is Holliday junction branch migration complex subunit RuvA (194 aa).

Residues 1-64 are domain I; that stretch reads MIGRLRGVLT…DDSAALYGFL (64 aa). The tract at residues 65-140 is domain II; that stretch reads SESERRLFRH…RAADFNNGIS (76 aa). Positions 140 to 144 are flexible linker; sequence STSGK. The segment at 145 to 194 is domain III; that stretch reads LNLDTVSEAALALQQLGYKPAEAARMARDAGTESDDVATVIKKALQAALC.

This sequence belongs to the RuvA family. In terms of assembly, homotetramer. Forms an RuvA(8)-RuvB(12)-Holliday junction (HJ) complex. HJ DNA is sandwiched between 2 RuvA tetramers; dsDNA enters through RuvA and exits via RuvB. An RuvB hexamer assembles on each DNA strand where it exits the tetramer. Each RuvB hexamer is contacted by two RuvA subunits (via domain III) on 2 adjacent RuvB subunits; this complex drives branch migration. In the full resolvosome a probable DNA-RuvA(4)-RuvB(12)-RuvC(2) complex forms which resolves the HJ.

Its subcellular location is the cytoplasm. The RuvA-RuvB-RuvC complex processes Holliday junction (HJ) DNA during genetic recombination and DNA repair, while the RuvA-RuvB complex plays an important role in the rescue of blocked DNA replication forks via replication fork reversal (RFR). RuvA specifically binds to HJ cruciform DNA, conferring on it an open structure. The RuvB hexamer acts as an ATP-dependent pump, pulling dsDNA into and through the RuvAB complex. HJ branch migration allows RuvC to scan DNA until it finds its consensus sequence, where it cleaves and resolves the cruciform DNA. This Xylella fastidiosa (strain M12) protein is Holliday junction branch migration complex subunit RuvA.